A 284-amino-acid chain; its full sequence is Shikimate dehydrogenase (NADP(+)) (284 aa).

Residues 20–22 (SIS) and Ser-67 each bind shikimate. Lys-71 functions as the Proton acceptor in the catalytic mechanism. Position 83 (Asp-83) interacts with NADP(+). The shikimate site is built by Asn-92 and Asp-107. Residues 129–133 (GAGGA) and Ile-227 contribute to the NADP(+) site. Residue Tyr-229 participates in shikimate binding. Gly-250 provides a ligand contact to NADP(+).

Belongs to the shikimate dehydrogenase family. As to quaternary structure, homodimer.

It carries out the reaction shikimate + NADP(+) = 3-dehydroshikimate + NADPH + H(+). The protein operates within metabolic intermediate biosynthesis; chorismate biosynthesis; chorismate from D-erythrose 4-phosphate and phosphoenolpyruvate: step 4/7. Involved in the biosynthesis of the chorismate, which leads to the biosynthesis of aromatic amino acids. Catalyzes the reversible NADPH linked reduction of 3-dehydroshikimate (DHSA) to yield shikimate (SA). This chain is Shikimate dehydrogenase (NADP(+)), found in Streptococcus pneumoniae (strain JJA).